Consider the following 1850-residue polypeptide: MPDSITNGGRPPAPPSSVSSTTASTTGNFGTRRRLVNRIKKVDELHPAQENPTMGSHWLSEQERSRLEAVQQDWRRTRPMKFQWTSKKRPDDPTTSSPSTVSISNALENSTPSLNNVSSITNSSSPFSLSSAATSTASAIIPFTSNVATNHPHLNHHVSRIPQAIVTGGTNGSLPPLLISPTSAAAATPLISGKAGPMSPSTGSPINVAATVLQNAVSSPQHSIFDRSRLNKIPPNTSLASSSSPSDAANNDKPIQQRHSILSNVRTLTQAMVNDGPRTLTGDDMDKMVSEEERARKEQEKREEEEKAARRIDVEDDFDAQEKPIDKSKNGRFLKFDEELGRGSFKTVFRGLDTETGVAVAWCELQESKLNKTERQRFREEAEMLKDLQHPNIVRFYDYWESADLCGKRKYIVLVTELMTSGTLKMYLKRFKRINIKVLKSWCRQILKGLSFLHTRNPPVIHRDLKCDNIFITGTTGSVKIGDLGLATLKNKSFAKSVIGTPEFMAPEMYEEMYDESVDVYAFGMCLLEMVTGEYPYSECMNPATIYRKVISGVKPECFSRIPAQYPEIREIIDRCIRVRREERSTVKQLLVDDFFTPEDLIGIRVEIKNRDADLNDLNVEIQMQLRVYDEKKRKQYRFKENEGLQFAFDIENDSPDEVVQQMIEQQHIPDEDTRMITKLIKDKVDAFRRDRDHRLLEIKRAKEEEERIREEAEIKEELRLRAEAKEKEKERLEKERLEKKAAAAAAANPNPTPIPPTPATPHSSAQQQPIPPPLSTQTSAEIQQSAQQPSVPVTMIANIPAMSPTSAQPQPVLSPTSAAVPVPTTMIHVPKPSEIPVQNVATTAAPVAANNVPPSPAPFKTEDIQTPTLAQNTVPRTISTDASGLVINTPASIASPSPAPSATDVASTTAPVTPAPTPTTTTDGGAAAASTTTENKEEKRKSNKRKVVMEILGCDESRNFALVSCRLDTSHKSVTFQFAPGTDKPCTIATKLLAEDCLLKVHVHIVEAQLGEVIQLINSDGKKGVGTKLATVLDPNSTEPPTITAVMPKDSSAATASNTKPKIEIEKTPPTRDASQEPNNVQVTNVRKVSQESNAESVQSIPRPGGIIVMSPTNQTDSAPPPTGAAAKPSRFQVTKSADPIATPISSSISTATVIPIVAATPTNITSEPVIVQPITAQVITHLATPSPVSHSLSSNSSPSATTHSNMSSIQSTTSVPGRRFTVQPVSQAESGISSSISTPHPEPTPAITSCPPPVPSVPPVVSNGTLNLEVAPKQTPSATNQNVDTQHSSSTASTATLVSETPATVHVTPISVPAPVQEPLVIDHHSDVLTQLDSELRKCFQVSGVSHSASPSTVVESLTSMTPQTIPLACQTVPASIGQAPAVIAAAHAASLIPNASVPQSPSRLDAETGLAGLHEKLEALKMEQDRREDMGDDAIGTTTTDGKDEIPIDTLKGLAEALGKVIHADGRETTPMPPDHPDLTDASTQQLISPSNPDVLTTMSSAVEGSASSTMIEDIDASTSAVDASMMNSMPPGAQNSTDQIPAAMTLSMDQECAQSMTSSITRNTTGTKLATFENLETALSSTLGTHIRQPNAPSSRDETTAPMTPSFTNERIGGGGGGGATSFSIGTPPSHSPFPVSECDYDLKGQMDLESEDPEVIQMIVRHRMEQHKLLEKQRVEIERLRSKIRVPRATSVNPEMIGDDEADTTLTALQSALGNASLSLPASPPPNTEIPDNEGQHHCNSFRCIGDPNDNVSIVNQIKQRLGIIPSSRQSVRSATSSSPSTPPSSSSAPPKSLSSPTKSYVSHCSLSIGYGSTASSEQQQREPSPSATTSSFLSDPATGVIENV.

Disordered stretches follow at residues 1–108 (MPDS…NALE), 221–253 (QHSI…NNDK), and 272–309 (MVND…EKAA). Low complexity-rich tracts occupy residues 16–26 (SSVSSTTASTT) and 234–251 (PPNT…AANN). Over residues 284 to 309 (DMDKMVSEEERARKEQEKREEEEKAA) the composition is skewed to basic and acidic residues. Residues 334-596 (LKFDEELGRG…VKQLLVDDFF (263 aa)) form the Protein kinase domain. ATP contacts are provided by residues serine 344, 416–419 (TELM), and lysine 466. The active-site Proton acceptor is aspartate 483. A coiled-coil region spans residues 693-749 (DHRLLEIKRAKEEEERIREEAEIKEELRLRAEAKEKEKERLEKERLEKKAAAAAAAN). The segment covering 727–742 (EKEKERLEKERLEKKA) has biased composition (basic and acidic residues). 7 disordered regions span residues 727-790 (EKEK…AQQP), 890-943 (TPAS…KRKS), 1040-1130 (EPPT…AAKP), 1188-1249 (SPVS…TPAI), 1588-1636 (GTHI…PSHS), 1721-1740 (ASLS…DNEG), and 1769-1850 (IIPS…IENV). The span at 751–760 (NPTPIPPTPA) shows a compositional bias: pro residues. Residues 776–790 (STQTSAEIQQSAQQP) are compositionally biased toward polar residues. Low complexity predominate over residues 890 to 934 (TPASIASPSPAPSATDVASTTAPVTPAPTPTTTTDGGAAAASTTT). Positions 1062–1071 (PKIEIEKTPP) are enriched in basic and acidic residues. Residues 1077–1101 (QEPNNVQVTNVRKVSQESNAESVQS) show a composition bias toward polar residues. Positions 1188-1207 (SPVSHSLSSNSSPSATTHSN) are enriched in low complexity. Positions 1208-1217 (MSSIQSTTSV) are enriched in polar residues. Residues 1771–1805 (PSSRQSVRSATSSSPSTPPSSSSAPPKSLSSPTKS) show a composition bias toward low complexity. A compositionally biased stretch (polar residues) spans 1806-1820 (YVSHCSLSIGYGSTA). Positions 1821–1832 (SSEQQQREPSPS) are enriched in low complexity.

This sequence belongs to the protein kinase superfamily. Ser/Thr protein kinase family. WNK subfamily. Interacts with gck-3 (via C-terminus). Requires Mg(2+) as cofactor. Expressed in pharynx, nervous system, hypodermis, spermatheca, excretory cell and canal and body wall muscles.

Its subcellular location is the cytoplasm. The enzyme catalyses L-seryl-[protein] + ATP = O-phospho-L-seryl-[protein] + ADP + H(+). It carries out the reaction L-threonyl-[protein] + ATP = O-phospho-L-threonyl-[protein] + ADP + H(+). Activated in response to hyperosmotic stress: cell shrinkage promotes formation of a membraneless compartment that concentrates wnk-1 with its downstrem substrates. In terms of biological role, serine/threonine-protein kinase component of the WNK3-SPAK/OSR1 kinase cascade, which plays an important role in the regulation of electrolyte homeostasis and regulatory volume increase in response to hyperosmotic stress. Wnk-1 mediates regulatory volume increase in response to hyperosmotic stress by acting as a molecular crowding sensor, which senses cell shrinkage and mediates formation of a membraneless compartment by undergoing liquid-liquid phase separation. The membraneless compartment concentrates wnk-1 with its substrates. Phosphorylates gck-3. Plays a role in osmotic stress responses during which it increases gpdh-1 translation, likely by phosphorylating gck-3. Essential for larval development and the tubular formation of the excretory canals. The polypeptide is Serine/threonine-protein kinase WNK (Caenorhabditis elegans).